Reading from the N-terminus, the 600-residue chain is FERM domain-containing protein 3 (600 aa).

The FERM domain maps to 31–311 (MRCTIRLLDD…ENQAFYKYAK (281 aa)). A disordered region spans residues 413-440 (SAPVLGNSPARGLETTADVTHDEEESIR). Residues 534–554 (LLLAAIGLLMVVLPLLLILLE) traverse the membrane as a helical segment.

The protein localises to the membrane. The protein is FERM domain-containing protein 3 (frmd3) of Xenopus tropicalis (Western clawed frog).